Reading from the N-terminus, the 464-residue chain is Desmin (464 aa).

S2 carries the blocked amino end (Ser) modification. The tract at residues 2 to 100 (SQSYSSSQRV…QEFLQTRTNE (99 aa)) is head. A phosphoserine; by CDK1 mark is found at S7 and S23. Position 65 is a phosphothreonine; by CDK1 (T65). Residues 100–408 (EKVELQELND…KLLEGEENRI (309 aa)) form the IF rod domain. A coil 1A region spans residues 101-133 (KVELQELNDRFANYIEKVRFLEQQNALMVAEVN). A linker 1 region spans residues 134 to 143 (RLRGKEPTRV). Residues 144 to 244 (AEMYEEELRE…HEEEIRELQA (101 aa)) are coil 1B. The linker 12 stretch occupies residues 245–260 (QLQEQHIQVEMDISKP). The segment at 261 to 279 (DLTAALRDIRAQYESIAAK) is coil 2A. Positions 280 to 287 (NIAEAEEW) are linker 2. The coil 2B stretch occupies residues 288–404 (YKSKVSDLTQ…ATYRKLLEGE (117 aa)). The interval 405-464 (ENRISIPMHQTFASALNFRETSPDQRGSEVHTKKTVMIKTIETRDGEVVSEATQQQHEVL) is tail.

Belongs to the intermediate filament family. In terms of assembly, homomer.

It is found in the cytoplasm. It localises to the myofibril. Its subcellular location is the sarcomere. The protein localises to the z line. The protein resides in the cell membrane. It is found in the sarcolemma. Muscle-specific type III intermediate filament essential for proper muscular structure and function. Plays a crucial role in maintaining the structure of sarcomeres, inter-connecting the Z-disks and forming the myofibrils, linking them not only to the sarcolemmal cytoskeleton, but also to the nucleus and mitochondria, thus providing strength for the muscle fiber during activity. In adult striated muscle they form a fibrous network connecting myofibrils to each other and to the plasma membrane from the periphery of the Z-line structures. This chain is Desmin (DES), found in Gallus gallus (Chicken).